A 735-amino-acid chain; its full sequence is FHF complex subunit HOOK-interacting protein 2B (735 aa).

The disordered stretch occupies residues Ser-183 to Gln-229. Low complexity predominate over residues Ser-196 to Gly-221.

The protein belongs to the FHIP family.

The polypeptide is FHF complex subunit HOOK-interacting protein 2B (fhip2b) (Danio rerio (Zebrafish)).